A 482-amino-acid chain; its full sequence is F-box/LRR-repeat protein At3g58930 (482 aa).

Positions 1 to 47 (MDRVSNLPDGVRGHILSFLPAKHIALTSVLSKSWLNLWKLIPILDID) constitute an F-box domain. 5 LRR repeats span residues 122 to 150 (SYED…KIRN), 175 to 200 (SDLI…RMAS), 222 to 248 (GTGC…NYSD), 313 to 344 (ILYL…GIKS), and 345 to 370 (EEGR…IIEG).

The sequence is that of F-box/LRR-repeat protein At3g58930 from Arabidopsis thaliana (Mouse-ear cress).